A 711-amino-acid polypeptide reads, in one-letter code: Ecdysone-inducible protein E75 (711 aa).

The nuclear receptor DNA-binding region spans 44 to 120 (TVLCRVCGDK…VGMSRDAVRF (77 aa)). 2 NR C4-type zinc fingers span residues 47 to 67 (CRVCGDKASGFHYGVHSCEGC) and 84 to 108 (CTKNQQCSILRINRNRCQYCRLKKC). The NR LBD domain maps to 153–400 (DGPRLLARVV…QQMWVEDEGA (248 aa)). Disordered stretches follow at residues 405–432 (SGADDSARSPIGSVSSSESSETTGDCGT), 466–530 (LTVT…DMPV), 559–602 (AMRR…PIRA), and 680–711 (DAPQPLNLSKKSPSPSPPPPPPRSYMPPMLPA). Basic and acidic residues-rich tracts occupy residues 511 to 521 (SLEEHSDDRRP) and 560 to 572 (MRRDTWSEAEARP). Pro residues predominate over residues 574 to 590 (RPTPSPQPPHHPHPASP). Low complexity-rich tracts occupy residues 591–602 (AHPAHSPRPIRA) and 682–692 (PQPLNLSKKSP). The segment covering 693 to 711 (SPSPPPPPPRSYMPPMLPA) has biased composition (pro residues).

The protein belongs to the nuclear hormone receptor family. NR1 subfamily.

The protein resides in the nucleus. Its function is as follows. Orphan receptor possibly involved in the regulation of genes in the ecdysteroid cascade. The protein is Ecdysone-inducible protein E75 (E75) of Galleria mellonella (Greater wax moth).